Consider the following 710-residue polypeptide: Polyribonucleotide nucleotidyltransferase (710 aa).

Mg(2+) contacts are provided by D487 and D493. A KH domain is found at 554-613 (PRIEVMNIPVDKIREVIGSGGKVIREIVEKTGAKINIEDDGTVKIASSSGKEIEAARKWI). The S1 motif domain occupies 623–691 (GQIYEGTVVK…ERGKVRLSMK (69 aa)).

This sequence belongs to the polyribonucleotide nucleotidyltransferase family. It depends on Mg(2+) as a cofactor.

The protein resides in the cytoplasm. The catalysed reaction is RNA(n+1) + phosphate = RNA(n) + a ribonucleoside 5'-diphosphate. Involved in mRNA degradation. Catalyzes the phosphorolysis of single-stranded polyribonucleotides processively in the 3'- to 5'-direction. The protein is Polyribonucleotide nucleotidyltransferase of Rhizobium rhizogenes (strain K84 / ATCC BAA-868) (Agrobacterium radiobacter).